A 100-amino-acid chain; its full sequence is Urease subunit gamma (100 aa).

The protein belongs to the urease gamma subunit family. As to quaternary structure, heterotrimer of UreA (gamma), UreB (beta) and UreC (alpha) subunits. Three heterotrimers associate to form the active enzyme.

The protein resides in the cytoplasm. The enzyme catalyses urea + 2 H2O + H(+) = hydrogencarbonate + 2 NH4(+). It functions in the pathway nitrogen metabolism; urea degradation; CO(2) and NH(3) from urea (urease route): step 1/1. The polypeptide is Urease subunit gamma (Cupriavidus necator (strain ATCC 17699 / DSM 428 / KCTC 22496 / NCIMB 10442 / H16 / Stanier 337) (Ralstonia eutropha)).